The chain runs to 435 residues: Bystin (435 aa).

The tract at residues Met1–Glu102 is disordered. Residue Arg40 is modified to Omega-N-methylarginine. Positions Ala71–Thr87 are enriched in basic and acidic residues. Ser98 carries the post-translational modification Phosphoserine. Thr154 carries the phosphothreonine modification. Residues Ser165 and Ser412 each carry the phosphoserine modification.

It belongs to the bystin family. Binds trophinin, tastin and cytokeratins.

It is found in the cytoplasm. The protein resides in the nucleus. It localises to the nucleolus. In terms of biological role, required for processing of 20S pre-rRNA precursor and biogenesis of 40S ribosomal subunits. The protein is Bystin (BYSL) of Bos taurus (Bovine).